The chain runs to 188 residues: Peptidyl-prolyl cis-trans isomerase H (188 aa).

Position 2 is an N-acetylalanine (alanine 2). Residues 14-176 form the PPIase cyclophilin-type domain; sequence FFDVSIGGQE…WTHSLTCPAL (163 aa).

The protein belongs to the cyclophilin-type PPIase family. PPIase H subfamily. In terms of assembly, interacts directly with PRPF4. Part of a heteromeric complex containing PPIH, PRPF3 and PRPF4 that is stable in the absence of RNA. Component of the U4/U6-U5 tri-snRNP complex composed of the U4, U6 and U5 snRNAs and at least PRPF3, PRPF4, PRPF6, PRPF8, PRPF31, SNRNP200, TXNL4A, SNRNP40, DDX23, CD2BP2, PPIH, SNU13, EFTUD2, SART1 and USP39. Heterodimer with PRPF18. Heterodimer with PRPF18.

Its subcellular location is the nucleus speckle. It is found in the cytoplasm. The enzyme catalyses [protein]-peptidylproline (omega=180) = [protein]-peptidylproline (omega=0). Its activity is regulated as follows. Inhibited by cyclosporin A. Its function is as follows. PPIase that catalyzes the cis-trans isomerization of proline imidic peptide bonds in oligopeptides and may therefore assist protein folding. Participates in pre-mRNA splicing. May play a role in the assembly of the U4/U5/U6 tri-snRNP complex, one of the building blocks of the spliceosome. May act as a chaperone. In Mus musculus (Mouse), this protein is Peptidyl-prolyl cis-trans isomerase H (Ppih).